The chain runs to 391 residues: 1-deoxy-D-xylulose 5-phosphate reductoisomerase (391 aa).

The NADPH site is built by Thr-11, Gly-12, Ser-13, Ile-14, and Asn-126. Lys-127 lines the 1-deoxy-D-xylulose 5-phosphate pocket. Position 128 (Glu-128) interacts with NADPH. Asp-152 contacts Mn(2+). 1-deoxy-D-xylulose 5-phosphate contacts are provided by Ser-153, Glu-154, Ser-176, and His-199. Mn(2+) is bound at residue Glu-154. Gly-205 is an NADPH binding site. Positions 212, 217, 218, and 221 each coordinate 1-deoxy-D-xylulose 5-phosphate. Glu-221 provides a ligand contact to Mn(2+).

It belongs to the DXR family. The cofactor is Mg(2+). Mn(2+) serves as cofactor.

The enzyme catalyses 2-C-methyl-D-erythritol 4-phosphate + NADP(+) = 1-deoxy-D-xylulose 5-phosphate + NADPH + H(+). It participates in isoprenoid biosynthesis; isopentenyl diphosphate biosynthesis via DXP pathway; isopentenyl diphosphate from 1-deoxy-D-xylulose 5-phosphate: step 1/6. Functionally, catalyzes the NADPH-dependent rearrangement and reduction of 1-deoxy-D-xylulose-5-phosphate (DXP) to 2-C-methyl-D-erythritol 4-phosphate (MEP). This Acidithiobacillus ferrooxidans (strain ATCC 53993 / BNL-5-31) (Leptospirillum ferrooxidans (ATCC 53993)) protein is 1-deoxy-D-xylulose 5-phosphate reductoisomerase.